A 157-amino-acid polypeptide reads, in one-letter code: D-aminoacyl-tRNA deacylase (157 aa).

Residues 137–138 (GP) carry the Gly-cisPro motif, important for rejection of L-amino acids motif.

Belongs to the DTD family. In terms of assembly, homodimer.

It is found in the cytoplasm. It carries out the reaction glycyl-tRNA(Ala) + H2O = tRNA(Ala) + glycine + H(+). The enzyme catalyses a D-aminoacyl-tRNA + H2O = a tRNA + a D-alpha-amino acid + H(+). Its function is as follows. An aminoacyl-tRNA editing enzyme that deacylates mischarged D-aminoacyl-tRNAs. Also deacylates mischarged glycyl-tRNA(Ala), protecting cells against glycine mischarging by AlaRS. Acts via tRNA-based rather than protein-based catalysis; rejects L-amino acids rather than detecting D-amino acids in the active site. By recycling D-aminoacyl-tRNA to D-amino acids and free tRNA molecules, this enzyme counteracts the toxicity associated with the formation of D-aminoacyl-tRNA entities in vivo and helps enforce protein L-homochirality. The sequence is that of D-aminoacyl-tRNA deacylase from Cyanothece sp. (strain PCC 7425 / ATCC 29141).